A 68-amino-acid polypeptide reads, in one-letter code: Large ribosomal subunit protein bL33c (68 aa).

The protein belongs to the bacterial ribosomal protein bL33 family.

Its subcellular location is the plastid. The protein resides in the chloroplast. The sequence is that of Large ribosomal subunit protein bL33c from Pinus koraiensis (Korean pine).